Here is a 327-residue protein sequence, read N- to C-terminus: Probable cell division protein WhiA (327 aa).

Residues 275–308 (SLEELGQLADPPMTKDAVAGRIRRLLSMADRKAK) constitute a DNA-binding region (H-T-H motif). A disordered region spans residues 306–327 (KAKETGIPDTESAVTADLLDDA).

This sequence belongs to the WhiA family.

Its function is as follows. Involved in cell division and chromosome segregation. This chain is Probable cell division protein WhiA, found in Rhodococcus jostii (strain RHA1).